A 766-amino-acid polypeptide reads, in one-letter code: 5-methyltetrahydropteroyltriglutamate--homocysteine methyltransferase (766 aa).

Residues 16–19 (RELK) and lysine 119 each bind 5-methyltetrahydropteroyltri-L-glutamate. L-homocysteine-binding positions include 440–442 (IGS) and glutamate 493. Residues 440–442 (IGS) and glutamate 493 contribute to the L-methionine site. Residues 524 to 525 (RC) and tryptophan 570 contribute to the 5-methyltetrahydropteroyltri-L-glutamate site. Aspartate 608 serves as a coordination point for L-homocysteine. Aspartate 608 contacts L-methionine. Glutamate 614 contacts 5-methyltetrahydropteroyltri-L-glutamate. Positions 650, 652, and 674 each coordinate Zn(2+). Histidine 703 functions as the Proton donor in the catalytic mechanism. Cysteine 735 provides a ligand contact to Zn(2+).

It belongs to the vitamin-B12 independent methionine synthase family. Zn(2+) serves as cofactor.

It carries out the reaction 5-methyltetrahydropteroyltri-L-glutamate + L-homocysteine = tetrahydropteroyltri-L-glutamate + L-methionine. The protein operates within amino-acid biosynthesis; L-methionine biosynthesis via de novo pathway; L-methionine from L-homocysteine (MetE route): step 1/1. Catalyzes the transfer of a methyl group from 5-methyltetrahydrofolate to homocysteine resulting in methionine formation. This is 5-methyltetrahydropteroyltriglutamate--homocysteine methyltransferase from Pseudomonas aeruginosa (strain ATCC 15692 / DSM 22644 / CIP 104116 / JCM 14847 / LMG 12228 / 1C / PRS 101 / PAO1).